The following is a 510-amino-acid chain: Lysine--tRNA ligase (510 aa).

Mg(2+) contacts are provided by E420 and E427.

It belongs to the class-II aminoacyl-tRNA synthetase family. In terms of assembly, homodimer. Mg(2+) serves as cofactor.

The protein resides in the cytoplasm. It carries out the reaction tRNA(Lys) + L-lysine + ATP = L-lysyl-tRNA(Lys) + AMP + diphosphate. This is Lysine--tRNA ligase from Vibrio vulnificus (strain YJ016).